A 545-amino-acid chain; its full sequence is DnaJ homolog subfamily C member 21 (545 aa).

A J domain is found at 3 to 69 (CHYEVLGVKR…QERAWYDNHR (67 aa)). Disordered stretches follow at residues 122 to 141 (EKEH…SFGE), 276 to 302 (EYGQ…IANV), 331 to 497 (SFKS…KEVN), and 522 to 545 (HATA…RKNR). Composition is skewed to acidic residues over residues 129–141 (EEDE…SFGE) and 283–295 (DASD…EELE). Residues 180 to 286 (RWEKRAMEKE…YGQEFGDASD (107 aa)) are a coiled coil. A C2H2-type 1 zinc finger spans residues 323 to 347 (LYCPACDKSFKSDKAMKNHSKSKKH). The segment covering 339-348 (KNHSKSKKHR) has biased composition (basic residues). The span at 372–388 (REEDDEEEDDDDDDEQN) shows a compositional bias: acidic residues. The span at 394–406 (KLSKRQKKKKRLQ) shows a compositional bias: basic residues. A C2H2-type 2 zinc finger spans residues 498 to 522 (LRCVTCQYEFTTRNKLFDHLKSTGH). The segment covering 535 to 545 (SKKKKDSRKNR) has biased composition (basic residues).

Its function is as follows. May act as a co-chaperone for HSP70. This chain is DnaJ homolog subfamily C member 21 (dnajc21), found in Danio rerio (Zebrafish).